Here is a 339-residue protein sequence, read N- to C-terminus: Longiborneol synthase CLM1 (339 aa).

Over residues 1–17 (MLATPTLSNFDKPSLPS) the composition is skewed to polar residues. The disordered stretch occupies residues 1–21 (MLATPTLSNFDKPSLPSSEGG). Residues D112, N241, S245, and E249 each contribute to the Mg(2+) site. Positions 241 to 249 (NDVLSFYKE) match the NDXXSXXXE magnesium-binding motif motif.

This sequence belongs to the trichodiene synthase family. It depends on Mg(2+) as a cofactor. Requires Mn(2+) as cofactor.

It carries out the reaction (2E,6E)-farnesyl diphosphate + H2O = (-)-longiborneol + diphosphate. It participates in mycotoxin biosynthesis. Its function is as follows. Terpene cyclase involved in the biosynthesis of culmorin, a tricyclic sesquiterpene diol reported to have antifungal activity and some phytotoxicity to wheat coleoptile tissue, contributing to Fusarium head blight disease. The terpene cyclase CLM1 is responsible for the cyclization of farnesyl diphosphate into the intermediate longiborneol. Longiborneol is then hydroxylated in a regio- and endo-stereoselective manner at position C-11 by the cytochrome P450 monooxygenase CLM2 to produce culmorin. Additional non-specific oxygenases are also able to hydroxylate longiborneol at other sites than C-11 leading to 3-hydroxylongiborneol, 5-hydroxylongiborneol, 12-hydroxylongiborneol and 15-hydroxylongiborneol. Moreover, another oxygenase capable of installing a C-11 exo-hydroxy group in longiborneol can also yield 11-epi-acetylculmorin. The production of these longiborneol derivatives is dwarfed by the high abundance of culmorin, suggesting that CLM2 displays superior enzymatic activity to the unidentified, possibly promiscuous, additional oxygenases. The polypeptide is Longiborneol synthase CLM1 (Gibberella zeae (strain ATCC MYA-4620 / CBS 123657 / FGSC 9075 / NRRL 31084 / PH-1) (Wheat head blight fungus)).